The chain runs to 426 residues: Protein CgeD (426 aa).

This sequence to B.subtilis spore coat polysaccharide biosynthesis protein SpsA.

Functionally, may be involved in maturation of the outermost layer of the spore. This chain is Protein CgeD (cgeD), found in Bacillus subtilis (strain 168).